An 867-amino-acid polypeptide reads, in one-letter code: MKKLYFPHQIERIVQQHWNDNQTFSVTEDKNKQKFYCLSMLPYPSGNLHMGHVRNYTIGDVISRYQRMLGKNVLQPIGWDAFGLPAEQAAIIHKKNPSDWTYSNIQYMKQQLKSLGFAYDWKRELITNDPQYYRWEQWFFIILYEKGLVYRKTTLVNWCPYHNTVLANEQVINGGCWRCHTKIQYKKIPQWFIKITHYADQLLNGLNQLQYWPEQVKTMQRNWIGQSTGTNVIFKILNSNITTITVYIARLDTFMGISYLTISVDHPITLQIAKINPDLANFISIYNTISIQLHNKQFICHKKKGIFTNLYAVHPITFTKLPIWVANFITPLEFDGQGAIASCPAHDQHDWEFAHQYDLPIKPVIKYADGELPNITNQAMIEPGILFNSDNFDDLTSHTAINYISKKLIDLKIAKTKIFYHLQDWGVSRQRYWGVPIPMIKLKNGIIQPVPKSELPVILPEIIYTKNNENNILSKNFNWTHTTYKNQDVIRDTDTFDTFMESSWYYARYTCPHYHDGMLQSDAANYWLPIDQYIGGIEHATMHLMYFRFYHKLMRDIGLIQSNEPAIRLLCQGMILADSFYYISNDGQKNWVSPNKVISTRDKMGHIIKSIDADGNNVIYAGLCKMSKSKNNGIDPNAMIQKYGADAVRFFIMFAAPAHSTLEWKESGIEGALRFLKRLWNITYQHIQNGLIHQLNMYKLENKHKIIRQKVHETIIKVTDDIDRRQSFNTALAAIMKLFNDIQDIFPINNTQDRSVLHEALSIIVKLLYPFTPHISYILWKELGYTNTIDDTTWPTPDLQAIQTQEILIIVQINGKKKKKIFVPINSDKNTIHEIAKQAIYQDKNLESKYVHKIIYIPNKIINFITK.

The 'HIGH' region signature appears at 42-52; it reads PYPSGNLHMGH. Positions 625-629 match the 'KMSKS' region motif; it reads KMSKS. An ATP-binding site is contributed by Lys628.

The protein belongs to the class-I aminoacyl-tRNA synthetase family.

The protein localises to the cytoplasm. The enzyme catalyses tRNA(Leu) + L-leucine + ATP = L-leucyl-tRNA(Leu) + AMP + diphosphate. In Blochmanniella floridana, this protein is Leucine--tRNA ligase.